The sequence spans 498 residues: ATP synthase subunit beta, chloroplastic (498 aa).

Residue 172–179 (GGAGVGKT) participates in ATP binding.

Belongs to the ATPase alpha/beta chains family. In terms of assembly, F-type ATPases have 2 components, CF(1) - the catalytic core - and CF(0) - the membrane proton channel. CF(1) has five subunits: alpha(3), beta(3), gamma(1), delta(1), epsilon(1). CF(0) has four main subunits: a(1), b(1), b'(1) and c(9-12).

Its subcellular location is the plastid. The protein localises to the chloroplast thylakoid membrane. It catalyses the reaction ATP + H2O + 4 H(+)(in) = ADP + phosphate + 5 H(+)(out). Its function is as follows. Produces ATP from ADP in the presence of a proton gradient across the membrane. The catalytic sites are hosted primarily by the beta subunits. The chain is ATP synthase subunit beta, chloroplastic from Salacca zalacca (Snake palm).